Consider the following 89-residue polypeptide: Small ribosomal subunit protein uS15 (89 aa).

This sequence belongs to the universal ribosomal protein uS15 family. As to quaternary structure, part of the 30S ribosomal subunit. Forms a bridge to the 50S subunit in the 70S ribosome, contacting the 23S rRNA.

Functionally, one of the primary rRNA binding proteins, it binds directly to 16S rRNA where it helps nucleate assembly of the platform of the 30S subunit by binding and bridging several RNA helices of the 16S rRNA. Its function is as follows. Forms an intersubunit bridge (bridge B4) with the 23S rRNA of the 50S subunit in the ribosome. In Pseudomonas fluorescens (strain SBW25), this protein is Small ribosomal subunit protein uS15.